We begin with the raw amino-acid sequence, 83 residues long: Large ribosomal subunit protein bL31B (83 aa).

This sequence belongs to the bacterial ribosomal protein bL31 family. Type B subfamily. Part of the 50S ribosomal subunit.

This is Large ribosomal subunit protein bL31B from Lacticaseibacillus casei (strain BL23) (Lactobacillus casei).